The sequence spans 380 residues: Queuine tRNA-ribosyltransferase (380 aa).

Aspartate 95 functions as the Proton acceptor in the catalytic mechanism. Residues 95-99, aspartate 149, glutamine 192, and glycine 219 contribute to the substrate site; that span reads DSGGF. Residues 250–256 form an RNA binding region; sequence GVGSADA. Aspartate 269 (nucleophile) is an active-site residue. The tract at residues 274-278 is RNA binding; important for wobble base 34 recognition; that stretch reads TRIAR. Zn(2+) contacts are provided by cysteine 307, cysteine 309, cysteine 312, and histidine 338.

The protein belongs to the queuine tRNA-ribosyltransferase family. Homodimer. Within each dimer, one monomer is responsible for RNA recognition and catalysis, while the other monomer binds to the replacement base PreQ1. The cofactor is Zn(2+).

The enzyme catalyses 7-aminomethyl-7-carbaguanine + guanosine(34) in tRNA = 7-aminomethyl-7-carbaguanosine(34) in tRNA + guanine. Its pathway is tRNA modification; tRNA-queuosine biosynthesis. In terms of biological role, catalyzes the base-exchange of a guanine (G) residue with the queuine precursor 7-aminomethyl-7-deazaguanine (PreQ1) at position 34 (anticodon wobble position) in tRNAs with GU(N) anticodons (tRNA-Asp, -Asn, -His and -Tyr). Catalysis occurs through a double-displacement mechanism. The nucleophile active site attacks the C1' of nucleotide 34 to detach the guanine base from the RNA, forming a covalent enzyme-RNA intermediate. The proton acceptor active site deprotonates the incoming PreQ1, allowing a nucleophilic attack on the C1' of the ribose to form the product. After dissociation, two additional enzymatic reactions on the tRNA convert PreQ1 to queuine (Q), resulting in the hypermodified nucleoside queuosine (7-(((4,5-cis-dihydroxy-2-cyclopenten-1-yl)amino)methyl)-7-deazaguanosine). The chain is Queuine tRNA-ribosyltransferase from Lactiplantibacillus plantarum (strain ATCC BAA-793 / NCIMB 8826 / WCFS1) (Lactobacillus plantarum).